The chain runs to 159 residues: Regulatory protein RecX (159 aa).

The protein belongs to the RecX family.

The protein resides in the cytoplasm. Its function is as follows. Modulates RecA activity. The protein is Regulatory protein RecX of Ralstonia pickettii (strain 12J).